The sequence spans 85 residues: Neurotoxin BmKAEP2 (85 aa).

The N-terminal stretch at 1–21 (MKLFLLLVISASMLIDGLVNA) is a signal peptide. One can recognise an LCN-type CS-alpha/beta domain in the interval 22 to 82 (DGYIRGSNGC…TWKSESNTCG (61 aa)). 4 cysteine pairs are disulfide-bonded: Cys31-Cys81, Cys35-Cys56, Cys42-Cys63, and Cys46-Cys65.

It belongs to the long (4 C-C) scorpion toxin superfamily. Sodium channel inhibitor family. Beta subfamily. In terms of tissue distribution, expressed by the venom gland.

It is found in the secreted. In terms of biological role, depressant insect beta-toxins cause a transient contraction paralysis followed by a slow flaccid paralysis. They bind voltage-independently at site-4 of sodium channels (Nav) and shift the voltage of activation toward more negative potentials thereby affecting sodium channel activation and promoting spontaneous and repetitive firing. This toxin is active only on insects. Has potential anti-epilepsy effect. The protein is Neurotoxin BmKAEP2 of Olivierus martensii (Manchurian scorpion).